The primary structure comprises 543 residues: MMPTPVILLKEGTDSSQGIPQLVSNISACQVIAEAVRTTLGPRGMDKLIVDGRGKATISNDGATILKLLDVVHPAAKTLVDIAKSQDAEVGDGTTSVTLLAAEFLKQVKPYVEEGLHPQIIIRAFRTATQLAVNKIKEIAVTVKKEDKVEQRKLLEKCAMTALSSKLISQQKAFFAKMVVDAVMMLDDLLQLKMIGIKKVQGGALEESQLVAGVAFKKTFSYAGFEMQPKKYHNPMIALLNVELELKAEKDNAEIRVHTVEDYQAIVDAEWNILYDKLEKIHHSGAKVVLSKLPIGDVATQYFADRDMFCAGRVPEEDLKRTMMACGGSIQTSVNALSSDVLGRCQVFEETQIGGERYNFFTGCPKAKTCTIILRGGAEQFMEETERSLHDAIMIVRRAIKNDSVVAGGGAIEMELSKYLRDYSRTIPGKQQLLIGAYAKALEIIPRQLCDNAGFDATNILNKLRARHAQGGMWYGVDINTEDIADNFEAFVWEPAMVRINALTAASEAACLIVSVDETIKNPRSTVDASPAAGRGRGRGRLH.

Met1 is subject to N-acetylmethionine. ADP is bound at residue Gly41. Gly41 is an ATP binding site. N6-acetyllysine is present on Lys67. Asp92 serves as a coordination point for Mg(2+). Residues Gly93, Thr94, Thr95, Ser96, Ser164, and Ser165 each coordinate ADP. Gly93 lines the ATP pocket. Residue Ser96 participates in ATP binding. Residues Lys250 and Lys320 each carry the N6-acetyllysine modification. Arg398 and Gly409 together coordinate ATP. Position 409 (Gly409) interacts with ADP. Lys430 participates in a covalent cross-link: Glycyl lysine isopeptide (Lys-Gly) (interchain with G-Cter in SUMO2). 2 residues coordinate ADP: Glu494 and Arg499. An ATP-binding site is contributed by Arg499. Positions 524 to 543 (RSTVDASPAAGRGRGRGRLH) are disordered. Arg535 carries the post-translational modification Omega-N-methylarginine.

It belongs to the TCP-1 chaperonin family. As to quaternary structure, component of the chaperonin-containing T-complex (TRiC), a hexadecamer composed of two identical back-to-back stacked rings enclosing a protein folding chamber. Each ring is made up of eight different subunits: TCP1/CCT1, CCT2, CCT3, CCT4, CCT5, CCT6A/CCT6, CCT7, CCT8. Interacts with PACRG. Interacts with DLEC1.

The protein resides in the cytoplasm. The catalysed reaction is ATP + H2O = ADP + phosphate + H(+). Functionally, component of the chaperonin-containing T-complex (TRiC), a molecular chaperone complex that assists the folding of actin, tubulin and other proteins upon ATP hydrolysis. The TRiC complex mediates the folding of WRAP53/TCAB1, thereby regulating telomere maintenance. This chain is T-complex protein 1 subunit eta (CCT7), found in Bos taurus (Bovine).